Reading from the N-terminus, the 24-residue chain is Calreticulin (24 aa).

This sequence belongs to the calreticulin family. Monomer. Component of an EIF2 complex at least composed of CELF1/CUGBP1, CALR, CALR3, EIF2S1, EIF2S2, HSP90B1 and HSPA5. Interacts with PDIA3/ERp57 and SPACA9. Interacts with TRIM21. Interacts with NR3C1. Interacts with PPIB. Interacts (via P-domain) with PDIA5. Interacts with CLCC1. In terms of tissue distribution, pancreas.

It is found in the endoplasmic reticulum lumen. The protein resides in the cytoplasm. Its subcellular location is the cytosol. It localises to the cytolytic granule. The protein localises to the secreted. It is found in the extracellular space. The protein resides in the extracellular matrix. Its subcellular location is the cell surface. It localises to the sarcoplasmic reticulum lumen. The protein localises to the cytoplasmic vesicle. It is found in the secretory vesicle. The protein resides in the cortical granule. Calcium-binding chaperone that promotes folding, oligomeric assembly and quality control in the endoplasmic reticulum (ER) via the calreticulin/calnexin cycle. This lectin interacts transiently with almost all of the monoglucosylated glycoproteins that are synthesized in the ER. Interacts with the DNA-binding domain of NR3C1 and mediates its nuclear export. Involved in maternal gene expression regulation. May participate in oocyte maturation via the regulation of calcium homeostasis. Present in the cortical granules of non-activated oocytes, is exocytosed during the cortical reaction in response to oocyte activation and might participate in the block to polyspermy. This chain is Calreticulin (CALR), found in Canis lupus familiaris (Dog).